Consider the following 117-residue polypeptide: Ig heavy chain V-A2 region K-25 (117 aa).

Gln-1 is modified (pyrrolidone carboxylic acid). In terms of domain architecture, Ig-like spans 1–106; sequence QSVKESEGGL…GLSYLKSSVD (106 aa). An intrachain disulfide couples Cys-21 to Cys-91.

In Oryctolagus cuniculus (Rabbit), this protein is Ig heavy chain V-A2 region K-25.